Reading from the N-terminus, the 244-residue chain is Type III pantothenate kinase (244 aa).

6-13 (DVGNTRIK) is an ATP binding site. Substrate-binding positions include Tyr87 and 94 to 97 (GIDR). Asp96 (proton acceptor) is an active-site residue. K(+) is bound at residue Asp117. Thr120 serves as a coordination point for ATP. Thr172 contacts substrate.

This sequence belongs to the type III pantothenate kinase family. In terms of assembly, homodimer. NH4(+) is required as a cofactor. It depends on K(+) as a cofactor.

The protein localises to the cytoplasm. It carries out the reaction (R)-pantothenate + ATP = (R)-4'-phosphopantothenate + ADP + H(+). The protein operates within cofactor biosynthesis; coenzyme A biosynthesis; CoA from (R)-pantothenate: step 1/5. Catalyzes the phosphorylation of pantothenate (Pan), the first step in CoA biosynthesis. The chain is Type III pantothenate kinase from Flavobacterium johnsoniae (strain ATCC 17061 / DSM 2064 / JCM 8514 / BCRC 14874 / CCUG 350202 / NBRC 14942 / NCIMB 11054 / UW101) (Cytophaga johnsonae).